The primary structure comprises 89 residues: Large ribosomal subunit protein bL27 (89 aa).

The tract at residues 1–21 is disordered; it reads MAHKKAGGSSRNGRDSESKRL.

This sequence belongs to the bacterial ribosomal protein bL27 family.

This chain is Large ribosomal subunit protein bL27, found in Chelativorans sp. (strain BNC1).